Reading from the N-terminus, the 130-residue chain is Small ribosomal subunit protein uS9 (130 aa).

This sequence belongs to the universal ribosomal protein uS9 family.

The polypeptide is Small ribosomal subunit protein uS9 (Thiobacillus denitrificans (strain ATCC 25259 / T1)).